A 147-amino-acid polypeptide reads, in one-letter code: Hemoglobin subunit beta (147 aa).

Positions 3-147 (HWTPEEKQYI…VAHALALGYH (145 aa)) constitute a Globin domain. Residues His-64 and His-93 each coordinate heme b.

This sequence belongs to the globin family. Heterotetramer of two alpha-D chains and two beta chains. As to expression, red blood cells.

Its function is as follows. Involved in oxygen transport from the lung to the various peripheral tissues. The protein is Hemoglobin subunit beta (HBB) of Chelonoidis niger (Galapagos giant tortoise).